Consider the following 391-residue polypeptide: Histidinol-phosphate aminotransferase (391 aa).

Lysine 246 bears the N6-(pyridoxal phosphate)lysine mark.

This sequence belongs to the class-II pyridoxal-phosphate-dependent aminotransferase family. Histidinol-phosphate aminotransferase subfamily. It depends on pyridoxal 5'-phosphate as a cofactor.

It carries out the reaction L-histidinol phosphate + 2-oxoglutarate = 3-(imidazol-4-yl)-2-oxopropyl phosphate + L-glutamate. It functions in the pathway amino-acid biosynthesis; L-histidine biosynthesis; L-histidine from 5-phospho-alpha-D-ribose 1-diphosphate: step 7/9. The sequence is that of Histidinol-phosphate aminotransferase from Methanopyrus kandleri (strain AV19 / DSM 6324 / JCM 9639 / NBRC 100938).